Consider the following 370-residue polypeptide: Lipoyl synthase, mitochondrial (370 aa).

Residues Cys100, Cys105, Cys111, Cys131, Cys135, Cys138, and Ser346 each contribute to the [4Fe-4S] cluster site. Residues 116–335 enclose the Radical SAM core domain; that stretch reads DKSRATATIM…KEVAEKLGFL (220 aa).

It belongs to the radical SAM superfamily. Lipoyl synthase family. It depends on [4Fe-4S] cluster as a cofactor.

The protein resides in the mitochondrion. It carries out the reaction [[Fe-S] cluster scaffold protein carrying a second [4Fe-4S](2+) cluster] + N(6)-octanoyl-L-lysyl-[protein] + 2 oxidized [2Fe-2S]-[ferredoxin] + 2 S-adenosyl-L-methionine + 4 H(+) = [[Fe-S] cluster scaffold protein] + N(6)-[(R)-dihydrolipoyl]-L-lysyl-[protein] + 4 Fe(3+) + 2 hydrogen sulfide + 2 5'-deoxyadenosine + 2 L-methionine + 2 reduced [2Fe-2S]-[ferredoxin]. The protein operates within protein modification; protein lipoylation via endogenous pathway; protein N(6)-(lipoyl)lysine from octanoyl-[acyl-carrier-protein]: step 2/2. Catalyzes the radical-mediated insertion of two sulfur atoms into the C-6 and C-8 positions of the octanoyl moiety bound to the lipoyl domains of lipoate-dependent enzymes, thereby converting the octanoylated domains into lipoylated derivatives. The polypeptide is Lipoyl synthase, mitochondrial (lip5) (Schizosaccharomyces pombe (strain 972 / ATCC 24843) (Fission yeast)).